A 171-amino-acid polypeptide reads, in one-letter code: Urease accessory protein UreE (171 aa).

Positions 143–171 are disordered; sequence SGGHQHHHGHDHDHGHHGHDHDHHHPDHE. The segment covering 152–171 has biased composition (basic and acidic residues); that stretch reads HDHDHGHHGHDHDHHHPDHE.

This sequence belongs to the UreE family.

Its subcellular location is the cytoplasm. Functionally, involved in urease metallocenter assembly. Binds nickel. Probably functions as a nickel donor during metallocenter assembly. The protein is Urease accessory protein UreE of Brucella abortus biovar 1 (strain 9-941).